We begin with the raw amino-acid sequence, 633 residues long: 1-deoxy-D-xylulose-5-phosphate synthase (633 aa).

Thiamine diphosphate-binding positions include His-72 and 113–115; that span reads GHS. Asp-144 provides a ligand contact to Mg(2+). Residues 145–146, Asn-173, Tyr-284, and Glu-367 contribute to the thiamine diphosphate site; that span reads GA. Asn-173 is a binding site for Mg(2+).

Belongs to the transketolase family. DXPS subfamily. In terms of assembly, homodimer. Mg(2+) serves as cofactor. It depends on thiamine diphosphate as a cofactor.

The enzyme catalyses D-glyceraldehyde 3-phosphate + pyruvate + H(+) = 1-deoxy-D-xylulose 5-phosphate + CO2. It participates in metabolic intermediate biosynthesis; 1-deoxy-D-xylulose 5-phosphate biosynthesis; 1-deoxy-D-xylulose 5-phosphate from D-glyceraldehyde 3-phosphate and pyruvate: step 1/1. In terms of biological role, catalyzes the acyloin condensation reaction between C atoms 2 and 3 of pyruvate and glyceraldehyde 3-phosphate to yield 1-deoxy-D-xylulose-5-phosphate (DXP). This is 1-deoxy-D-xylulose-5-phosphate synthase from Lysinibacillus sphaericus (strain C3-41).